The sequence spans 340 residues: Sulfotransferase ppzF (340 aa).

It functions in the pathway secondary metabolite biosynthesis. Sulfotransferase; part of the gene cluster that mediates the biosynthesis of pyrrolopyrazines, secondary metabolites showing insecticidal activity. The role of ppzF within the pathway has still to be determined. The single multifunctional NRPS ppzA is sufficient to produce peramine via condensation of 1-pyrroline-5-carboxylate and arginine, N-methylation of the alpha-amino group of arginine and reduction of the thioester and the cyclization to form an iminium ion resulting in release from the peptide synthetase. Deprotonation of this intermediate and oxidation of the pyrroline ring would give rise to peramine. In Epichloe species that produce only peramine, the peramine synthetase gene is not localized in a gene cluster, in contrast to Metarhizium species that contain additional pyrrolopyrazine biosynthesis genes. The 2-oxoglutarate-Fe(II) type oxidoreductase ppzC hydroxylates peramine to yield the newly identified compound 8-hydroxyperamine whereas ppzD converts L-proline into trans-4-hydroxy-L-proline, a precursor of peramine biosynthesis. In Metarhizium rileyi (strain RCEF 4871) (Nomuraea rileyi), this protein is Sulfotransferase ppzF.